Reading from the N-terminus, the 533-residue chain is Zinc finger protein 692 (533 aa).

Disordered regions lie at residues 124-251 (SLIP…PATL) and 290-310 (TESL…TCDE). Positions 149–178 (EARRKQEAEGLECEHRERTQETRLSRRVEP) are enriched in basic and acidic residues. Acidic residues predominate over residues 190-208 (QVVEEEEEEEEEEEEEELL). Ser233 is subject to Phosphoserine. Over residues 290–305 (TESLDSPGSQAQSAPN) the composition is skewed to polar residues. 5 consecutive C2H2-type zinc fingers follow at residues 329 to 354 (MPCD…KYQH), 360 to 384 (FCCP…VKLH), 390 to 412 (YICE…RRIH), 418 to 440 (LQCE…RRKH), and 449 to 472 (FPCE…SKSH). At Ser471 the chain carries Phosphoserine. Positions 478-533 (VQESPGSLGSSPSISAPEPLQSPEGTSFSTSYDSNPAPSTSISSPGVPAPRNTEKS) are disordered. A compositionally biased stretch (low complexity) spans 481 to 492 (SPGSLGSSPSIS). A compositionally biased stretch (polar residues) spans 500–521 (PEGTSFSTSYDSNPAPSTSISS).

This sequence belongs to the krueppel C2H2-type zinc-finger protein family. Phosphorylation at Ser-471 results in loss of DNA-binding activity.

It is found in the nucleus. Functionally, may act as an transcriptional repressor for PCK1 gene expression, in turns may participate in the hepatic gluconeogenesis regulation through the activated AMPK signaling pathway. This chain is Zinc finger protein 692, found in Rattus norvegicus (Rat).